Reading from the N-terminus, the 472-residue chain is uncharacterized protein (472 aa).

The protein resides in the mitochondrion. This is an uncharacterized protein from Saccharomyces cerevisiae (strain ATCC 204508 / S288c) (Baker's yeast).